The primary structure comprises 99 residues: Aspartyl/glutamyl-tRNA(Asn/Gln) amidotransferase subunit C (99 aa).

It belongs to the GatC family. As to quaternary structure, heterotrimer of A, B and C subunits.

The enzyme catalyses L-glutamyl-tRNA(Gln) + L-glutamine + ATP + H2O = L-glutaminyl-tRNA(Gln) + L-glutamate + ADP + phosphate + H(+). The catalysed reaction is L-aspartyl-tRNA(Asn) + L-glutamine + ATP + H2O = L-asparaginyl-tRNA(Asn) + L-glutamate + ADP + phosphate + 2 H(+). Its function is as follows. Allows the formation of correctly charged Asn-tRNA(Asn) or Gln-tRNA(Gln) through the transamidation of misacylated Asp-tRNA(Asn) or Glu-tRNA(Gln) in organisms which lack either or both of asparaginyl-tRNA or glutaminyl-tRNA synthetases. The reaction takes place in the presence of glutamine and ATP through an activated phospho-Asp-tRNA(Asn) or phospho-Glu-tRNA(Gln). The sequence is that of Aspartyl/glutamyl-tRNA(Asn/Gln) amidotransferase subunit C from Burkholderia thailandensis (strain ATCC 700388 / DSM 13276 / CCUG 48851 / CIP 106301 / E264).